The following is a 423-amino-acid chain: Adenosylmethionine-8-amino-7-oxononanoate aminotransferase (423 aa).

Residue Trp-51 coordinates substrate. 111 to 112 (GS) provides a ligand contact to pyridoxal 5'-phosphate. Residue Tyr-144 participates in substrate binding. Asp-243 provides a ligand contact to pyridoxal 5'-phosphate. Substrate-binding residues include Lys-272 and Gly-306. Lys-272 is subject to N6-(pyridoxal phosphate)lysine. 307 to 308 (PT) contributes to the pyridoxal 5'-phosphate binding site. Arg-390 contributes to the substrate binding site.

Belongs to the class-III pyridoxal-phosphate-dependent aminotransferase family. BioA subfamily. As to quaternary structure, homodimer. The cofactor is pyridoxal 5'-phosphate.

Its subcellular location is the cytoplasm. It catalyses the reaction (8S)-8-amino-7-oxononanoate + S-adenosyl-L-methionine = S-adenosyl-4-methylsulfanyl-2-oxobutanoate + (7R,8S)-7,8-diammoniononanoate. It participates in cofactor biosynthesis; biotin biosynthesis; 7,8-diaminononanoate from 8-amino-7-oxononanoate (SAM route): step 1/1. Functionally, catalyzes the transfer of the alpha-amino group from S-adenosyl-L-methionine (SAM) to 7-keto-8-aminopelargonic acid (KAPA) to form 7,8-diaminopelargonic acid (DAPA). It is the only aminotransferase known to utilize SAM as an amino donor. The chain is Adenosylmethionine-8-amino-7-oxononanoate aminotransferase from Corynebacterium glutamicum (strain ATCC 13032 / DSM 20300 / JCM 1318 / BCRC 11384 / CCUG 27702 / LMG 3730 / NBRC 12168 / NCIMB 10025 / NRRL B-2784 / 534).